Reading from the N-terminus, the 324-residue chain is Glyoxylate/hydroxypyruvate reductase B (324 aa).

Catalysis depends on residues R237 and E266. H285 functions as the Proton donor in the catalytic mechanism.

This sequence belongs to the D-isomer specific 2-hydroxyacid dehydrogenase family. GhrB subfamily. In terms of assembly, homodimer.

It is found in the cytoplasm. It carries out the reaction glycolate + NADP(+) = glyoxylate + NADPH + H(+). The enzyme catalyses (R)-glycerate + NAD(+) = 3-hydroxypyruvate + NADH + H(+). It catalyses the reaction (R)-glycerate + NADP(+) = 3-hydroxypyruvate + NADPH + H(+). Its function is as follows. Catalyzes the NADPH-dependent reduction of glyoxylate and hydroxypyruvate into glycolate and glycerate, respectively. The polypeptide is Glyoxylate/hydroxypyruvate reductase B (Salmonella paratyphi A (strain ATCC 9150 / SARB42)).